The chain runs to 378 residues: Putative F-box protein At5g51000 (378 aa).

Residues 1–47 (MSTMSDLFPDLVEEILSRVPITSLKAVKLTCKQWNDLSKDSSFTKNH) form the F-box domain.

The protein is Putative F-box protein At5g51000 of Arabidopsis thaliana (Mouse-ear cress).